Reading from the N-terminus, the 372-residue chain is MAKRDFYEVLGVTKTCTEAEMKVAFRKAAMQWHPDRNPGNEEAEIQFKEINEAYQTLSDGQKRAAYDRYGHAAFEHGGGGNDGFASSMADIFDDLFGDVMGRRGGRNGPARGSDLRYNMEITLEEAFQGKLASLTLPTSITCEACDGTGAKAGAKPRICPTCGGQGRVRAQQGFFAIERTCPQCHGRGEIIDDPCQACGGAGRVTRERTLSVNIPPGVEDGTRIRLAGEGEAGTRGGPAGDLYIFVSTKPHPFFQRDGADLFCRVPISMTQAALGGEVTVHTIDGKEAKVKISEGTQSGKQFKLKNKGMPVLRSREVGDLYIQATVETPQNLTKRQRELLAEFDAESSNKTHPEASGFFARMKDFFENLSGQ.

The J domain maps to 5-70 (DFYEVLGVTK…QKRAAYDRYG (66 aa)). The segment at 129-207 (GKLASLTLPT…CGGAGRVTRE (79 aa)) adopts a CR-type zinc-finger fold. 8 residues coordinate Zn(2+): C142, C145, C159, C162, C181, C184, C195, and C198. 4 CXXCXGXG motif repeats span residues 142-149 (CEACDGTG), 159-166 (CPTCGGQG), 181-188 (CPQCHGRG), and 195-202 (CQACGGAG).

The protein belongs to the DnaJ family. Homodimer. The cofactor is Zn(2+).

It is found in the cytoplasm. Its function is as follows. Participates actively in the response to hyperosmotic and heat shock by preventing the aggregation of stress-denatured proteins and by disaggregating proteins, also in an autonomous, DnaK-independent fashion. Unfolded proteins bind initially to DnaJ; upon interaction with the DnaJ-bound protein, DnaK hydrolyzes its bound ATP, resulting in the formation of a stable complex. GrpE releases ADP from DnaK; ATP binding to DnaK triggers the release of the substrate protein, thus completing the reaction cycle. Several rounds of ATP-dependent interactions between DnaJ, DnaK and GrpE are required for fully efficient folding. Also involved, together with DnaK and GrpE, in the DNA replication of plasmids through activation of initiation proteins. In Beijerinckia indica subsp. indica (strain ATCC 9039 / DSM 1715 / NCIMB 8712), this protein is Chaperone protein DnaJ.